Consider the following 274-residue polypeptide: Probable starch degradation products transport system permease protein AmyC (274 aa).

6 helical membrane passes run 11–31 (LTFLGIVLSLLWISPFYIILV), 73–93 (LIITVFSILIIAIFSSMTAYA), 103–123 (VIIYMIFTVAMLIPFQSVMIP), 139–159 (LVFMYLGFGSSLGVFLYYGAL), 184–204 (IILPLLNPTTITLAVLDIMWI), and 238–258 (WNLGMAGLTIAILPVVIFYFL). One can recognise an ABC transmembrane type-1 domain in the interval 69 to 259 (FSNTLIITVF…LPVVIFYFLA (191 aa)).

The protein belongs to the binding-protein-dependent transport system permease family. MalFG subfamily.

It is found in the cell membrane. Its function is as follows. Probably part of a binding-protein-dependent transport system starch degradation products. Probably responsible for the translocation of the substrate across the membrane. In Thermoanaerobacterium thermosulfurigenes (Clostridium thermosulfurogenes), this protein is Probable starch degradation products transport system permease protein AmyC (amyC).